Reading from the N-terminus, the 91-residue chain is Small ribosomal subunit protein uS19 (91 aa).

This sequence belongs to the universal ribosomal protein uS19 family.

Its function is as follows. Protein S19 forms a complex with S13 that binds strongly to the 16S ribosomal RNA. The protein is Small ribosomal subunit protein uS19 of Cupriavidus pinatubonensis (strain JMP 134 / LMG 1197) (Cupriavidus necator (strain JMP 134)).